A 369-amino-acid polypeptide reads, in one-letter code: Peridinin-chlorophyll a-binding protein 2, chloroplastic (369 aa).

The N-terminal 56 residues, 1–56 (MVRSGKKAVVLATVAFCATSVVQKTCGFVPSPLRQRAAAAGAAASVATMFAPAAFA), are a transit peptide targeting the chloroplast. 2 repeat units span residues 57 to 219 (DEIG…VPSG) and 220 to 369 (DTIG…AAQR).

As to quaternary structure, homotrimer.

It localises to the plastid. The protein localises to the chloroplast. Its function is as follows. Water-soluble antenna for capture of solar energy in the blue-green range. Peridinin is an asymmetric carotenoid. The sequence is that of Peridinin-chlorophyll a-binding protein 2, chloroplastic from Amphidinium carterae (Dinoflagellate).